The primary structure comprises 114 residues: Superoxide dismutase [Cu-Zn] (114 aa).

Positions 37, 39, and 54 each coordinate Cu cation. Zn(2+) is bound by residues H54, H62, H71, and D74. The disordered stretch occupies residues 54-80; it reads HFNPGNKEHGAPTDGNRHLGDLGNIQA. The segment covering 59–73 has biased composition (basic and acidic residues); the sequence is NKEHGAPTDGNRHLG. H111 contributes to the Cu cation binding site.

This sequence belongs to the Cu-Zn superoxide dismutase family. In terms of assembly, homodimer. Cu cation is required as a cofactor. Requires Zn(2+) as cofactor.

It is found in the cytoplasm. The catalysed reaction is 2 superoxide + 2 H(+) = H2O2 + O2. Its function is as follows. Destroys radicals which are normally produced within the cells and which are toxic to biological systems. The sequence is that of Superoxide dismutase [Cu-Zn] from Drosophila tolteca (Fruit fly).